The chain runs to 151 residues: UPF0102 protein Ava_4800 (151 aa).

This sequence belongs to the UPF0102 family.

The polypeptide is UPF0102 protein Ava_4800 (Trichormus variabilis (strain ATCC 29413 / PCC 7937) (Anabaena variabilis)).